The sequence spans 147 residues: ATP synthase epsilon chain (147 aa).

The protein belongs to the ATPase epsilon chain family. As to quaternary structure, F-type ATPases have 2 components, CF(1) - the catalytic core - and CF(0) - the membrane proton channel. CF(1) has five subunits: alpha(3), beta(3), gamma(1), delta(1), epsilon(1). CF(0) has three main subunits: a, b and c.

It is found in the cell inner membrane. In terms of biological role, produces ATP from ADP in the presence of a proton gradient across the membrane. In Protochlamydia amoebophila (strain UWE25), this protein is ATP synthase epsilon chain.